A 717-amino-acid polypeptide reads, in one-letter code: Protein Teyrha-meyrha (717 aa).

Positions F140–H152 are enriched in polar residues. 6 disordered regions span residues F140–A214, H229–V270, K440–K498, S511–P539, D563–A594, and Q624–A717. Residues A195–A214 show a composition bias toward low complexity. Residues P235–H263 show a composition bias toward basic residues. The span at P442–E451 shows a compositional bias: basic and acidic residues. Acidic residues predominate over residues E452–P466. Over residues E471–T482 the composition is skewed to polar residues. Positions K513–V522 are enriched in basic and acidic residues. Low complexity-rich tracts occupy residues S523–S533 and N570–N580. Over residues Q630–N640 the composition is skewed to polar residues. Low complexity predominate over residues N667–N686. Positions P687–S704 are enriched in polar residues.

In embryos, expressed specifically in M12 (at protein level).

It is found in the nucleus. Its function is as follows. Required for the correct synaptic targeting of motoneurons RP5 and V to muscle 12 (M12). May be involved in the negative regulation of Tl in M12. Involved in the correct patterning of veins in the proximal (costal) region of the wing blade. The polypeptide is Protein Teyrha-meyrha (Drosophila melanogaster (Fruit fly)).